A 566-amino-acid polypeptide reads, in one-letter code: 4-coumarate--CoA ligase-like 6 (566 aa).

A disordered region spans residues 1–21 (MAATHLHIPPNPKTQTSHQNP). 6 residues coordinate ATP: Ser-212, Ser-213, Gly-214, Thr-215, Thr-216, and Lys-220. Tyr-263 is a (E)-4-coumaroyl-AMP binding site. Arg-284 contacts CoA. The tract at residues 286-356 (DASDVVNVIE…QTLPHVDLIQ (71 aa)) is SBD1. Ala-334, Gln-356, Gly-357, and Thr-361 together coordinate (E)-4-coumaroyl-AMP. ATP-binding residues include Gln-356, Gly-357, Thr-361, Asp-442, and Arg-457. The interval 357-421 (GYGMTESTAV…IQGPGVMKGY (65 aa)) is SBD2. Residues Lys-459 and Lys-463 each contribute to the (E)-4-coumaroyl-AMP site. CoA is bound by residues Lys-465 and Gly-466. Residue Lys-548 coordinates ATP. The Microbody targeting signal signature appears at 564-566 (SRL).

The protein belongs to the ATP-dependent AMP-binding enzyme family. Requires Mg(2+) as cofactor. Expressed at very low level in leaves.

The protein resides in the peroxisome. It carries out the reaction (E)-4-coumarate + ATP + CoA = (E)-4-coumaroyl-CoA + AMP + diphosphate. The enzyme catalyses (E)-4-coumarate + ATP + H(+) = (E)-4-coumaroyl-AMP + diphosphate. It catalyses the reaction (E)-4-coumaroyl-AMP + CoA = (E)-4-coumaroyl-CoA + AMP + H(+). The catalysed reaction is (E)-ferulate + ATP + CoA = (E)-feruloyl-CoA + AMP + diphosphate. It carries out the reaction (E)-ferulate + ATP + H(+) = (E)-feruloyl-AMP + diphosphate. The enzyme catalyses (E)-feruloyl-AMP + CoA = (E)-feruloyl-CoA + AMP + H(+). It catalyses the reaction (E)-caffeate + ATP + CoA = (E)-caffeoyl-CoA + AMP + diphosphate. The catalysed reaction is (E)-caffeate + ATP + H(+) = (E)-caffeoyl-AMP + diphosphate. It carries out the reaction (E)-caffeoyl-AMP + CoA = (E)-caffeoyl-CoA + AMP + H(+). The enzyme catalyses (E)-cinnamate + ATP + CoA = (E)-cinnamoyl-CoA + AMP + diphosphate. It catalyses the reaction 4-hydroxybenzoate + ATP + CoA = 4-hydroxybenzoyl-CoA + AMP + diphosphate. The catalysed reaction is tetradecanoate + ATP + CoA = tetradecanoyl-CoA + AMP + diphosphate. It carries out the reaction hexanoate + ATP + CoA = hexanoyl-CoA + AMP + diphosphate. The enzyme catalyses heptanoate + ATP + CoA = heptanoyl-CoA + AMP + diphosphate. In terms of biological role, contributes to jasmonic acid biosynthesis by initiating the beta-oxidative chain shortening of its precursors. Acts as a carboxylate--CoA ligase that can use preferentially p-coumarate, ferulate and caffeate as substrates and, with a lower efficiency, (E)-cinnamate and 4-hydroxybenzoate as substrates. Involved in the biosynthesis of ubiquinone from phenylalanine by activating the propyl side chain of 4-coumarate, and possibly trans-cinnamate and 4-hydroxybenzoate, for subsequent beta-oxidative shortening and the formation of the benzenoid moiety of ubiquinone. Follows a two-step reaction mechanism, wherein the carboxylate substrate first undergoes adenylation by ATP, followed by a thioesterification in the presence of CoA to yield the final CoA thioester. In Arabidopsis thaliana (Mouse-ear cress), this protein is 4-coumarate--CoA ligase-like 6.